We begin with the raw amino-acid sequence, 59 residues long: Potassium channel toxin alpha-KTx 16.2 (59 aa).

Residues 1-22 form the signal peptide; it reads MKIFSILLVALIICSISICTEA. 3 disulfide bridges follow: Cys30-Cys51, Cys36-Cys56, and Cys40-Cys58.

The protein belongs to the short scorpion toxin superfamily. Potassium channel inhibitor family. Alpha-KTx 16 subfamily. In terms of tissue distribution, expressed by the venom gland.

The protein resides in the secreted. Functionally, alpha-KTx 16.2: inhibits large conductance calcium-activated potassium channels (KCa1.1/Slo-beta4 KCNMA1/KCNMB4). It appears to block channel activity by a simple bimolecular inhibition process. Shows a fast association rate and a slow dissociation rate of binding on rat brain synaptosome. Significantly inhibits voltage-dependent sodium current and voltage-dependent delayed rectifier potassium currents. Its function is as follows. Significantly inhibits voltage-dependent sodium current (Nav) and voltage-dependent delayed rectifier potassium current. This is Potassium channel toxin alpha-KTx 16.2 from Olivierus martensii (Manchurian scorpion).